The chain runs to 160 residues: Cytochrome b6-f complex subunit 4 (160 aa).

3 consecutive transmembrane segments (helical) span residues L36–V56, L95–E115, and T131–I151.

The protein belongs to the cytochrome b family. PetD subfamily. In terms of assembly, the 4 large subunits of the cytochrome b6-f complex are cytochrome b6, subunit IV (17 kDa polypeptide, petD), cytochrome f and the Rieske protein, while the 4 small subunits are petG, petL, petM and petN. The complex functions as a dimer.

The protein localises to the plastid. It is found in the chloroplast thylakoid membrane. Functionally, component of the cytochrome b6-f complex, which mediates electron transfer between photosystem II (PSII) and photosystem I (PSI), cyclic electron flow around PSI, and state transitions. This Spirogyra maxima (Green alga) protein is Cytochrome b6-f complex subunit 4.